The chain runs to 193 residues: Putative anthranilate synthase component II (193 aa).

One can recognise a Glutamine amidotransferase type-1 domain in the interval 2–193 (KLLIINNHDS…WLAIPPTTNP (192 aa)). Residues C78, H168, and E170 contribute to the active site.

In terms of assembly, tetramer of two components I and two components II.

It carries out the reaction chorismate + L-glutamine = anthranilate + pyruvate + L-glutamate + H(+). It functions in the pathway amino-acid biosynthesis; L-tryptophan biosynthesis; L-tryptophan from chorismate: step 1/5. This is Putative anthranilate synthase component II from Haemophilus influenzae (strain ATCC 51907 / DSM 11121 / KW20 / Rd).